The sequence spans 429 residues: Ribosomal RNA small subunit methyltransferase B (429 aa).

S-adenosyl-L-methionine is bound by residues 254-260 (CAAPGGK), aspartate 277, aspartate 303, and aspartate 322. The active-site Nucleophile is cysteine 375.

This sequence belongs to the class I-like SAM-binding methyltransferase superfamily. RsmB/NOP family.

It is found in the cytoplasm. It carries out the reaction cytidine(967) in 16S rRNA + S-adenosyl-L-methionine = 5-methylcytidine(967) in 16S rRNA + S-adenosyl-L-homocysteine + H(+). In terms of biological role, specifically methylates the cytosine at position 967 (m5C967) of 16S rRNA. The polypeptide is Ribosomal RNA small subunit methyltransferase B (Yersinia pseudotuberculosis serotype O:1b (strain IP 31758)).